Here is a 953-residue protein sequence, read N- to C-terminus: MTAAENVCYTLINVPMDSEPPSEISLKNDLEKGDVKSKTEALKKVIIMILNGEKLPGLLMTIIRFVLPLQDHTIKKLLLVFWEIVPKTTPDGRLLHEMILVCDAYRKDLQHPNEFIRGSTLRFLCKLKEAELLEPLMPAIRACLEHRHSYVRRNAVLAIYTIYRNFENLIPDAPELIHDFLVNEKDASCKRNAFMMLIHADQDRALDYLSTCIDQVQTFGDILQLVIVELIYKVCHANPSERARFIRCIYNLLQSSSPAVKYEAAGTLVTLSSAPTAIKAAAQCYIDLIIKESDNNVKLIVLDRLVELKEHPAHERVLQDLVMDILRVLSTPDLEVRKKTLQLALDLVSSRNVEELVIVLKKEVIKTNNVSEHEDTDKYRQLLVRTLHSCSVRFPDMAANVIPVLMEFLSDSNEAAAADVLEFVREAIQRFDNLRMLIVEKMLEVFHAIKSVKIYRGALWILGEYCSTKEDIQSVMTEVRRSLGEIPIVESEIKKEAGELKPEEEITVGPVQKLVTEMGTYATQSALSSSRPTKKEEDRPPLRGFLLDGDFFVAASLATTLTKIALRYVALVQEKKKQNSFVAEAMLLMATILHLGKSSLPKKPITDDDVDRISLCLKVLSECSPLMNDIFNKECRQSLSQMLSAKLEEEKLSQKKESEKRNVTVQPDDPISFMQLTAKNEMNCKEDQFQLSLLAAMGNTQRKEAADPLASKLNKVTQLTGFSDPVYAEAYVHVNQYDIVLDVLVVNQTSDTLQNCTLELATLGDLKLVEKPSPLTLAPHDFANIKANVKVASTENGIIFGNIVYDVSGAASDRNCVVLSDIHIDIMDYIQPATCTDAEFRQMWAEFEWENKVTVNTNVTDLNDYLQHILKSTNMKCLTPEKALSGYCGFMAANLYARSIFGEDALANVSIEKPVHQGPDAAVTGHIRIRAKSQGMALSLGDKINLSQKKTSL.

An N-acetylthreonine modification is found at Thr-2. HEAT repeat units follow at residues 96-131 (HEMILVCDAYRKDLQHPNEFIRGSTLRFLCKLKEAE), 132-168 (LLEPLMPAIRACLEHRHSYVRRNAVLAIYTIYRNFEN), 240-276 (SERARFIRCIYNLLQSSSPAVKYEAAGTLVTLSSAPT), 277-314 (AIKAAAQCYIDLIIKESDNNVKLIVLDRLVELKEHPAH), 316-353 (RVLQDLVMDILRVLSTPDLEVRKKTLQLALDLVSSRNV), and 396-433 (DMAANVIPVLMEFLSDSNEAAAADVLEFVREAIQRFDN). An N6-acetyllysine modification is found at Lys-494.

Oligomeric complex that consists of at least the alpha, beta, beta', gamma, delta, epsilon and zeta subunits. Interacts with SCYL1. Interacts with CAPN8. Interacts with COPG1. Interacts with ARF1 (myristoylated); this interaction is required for binding of COPB1 to Golgi membranes. Interacts (via trunk domain) with ARF1 (via switch I region); the interaction is direct. Interacts with KCNK2 (via N-terminus); this interaction increases the channel-mediated whole cell currents and promotes plasma membrane expression of KCNK2. Interacts with PRKCE. Interacts with STX17. Interacts with TMEM115. Interacts with TMEM41B. In terms of processing, proteolytically cleaved between Ser-528 and Ser-529 by CAPN8.

The protein resides in the cytoplasm. Its subcellular location is the golgi apparatus membrane. It localises to the cytoplasmic vesicle. The protein localises to the COPI-coated vesicle membrane. It is found in the cell membrane. The protein resides in the endoplasmic reticulum-Golgi intermediate compartment. Its subcellular location is the microsome membrane. Functionally, the coatomer is a cytosolic protein complex that binds to dilysine motifs and reversibly associates with Golgi non-clathrin-coated vesicles, which further mediate biosynthetic protein transport from the ER, via the Golgi up to the trans Golgi network. Coatomer complex is required for budding from Golgi membranes, and is essential for the retrograde Golgi-to-ER transport of dilysine-tagged proteins. In mammals, the coatomer can only be recruited by membranes associated to ADP-ribosylation factors (ARFs), which are small GTP-binding proteins; the complex also influences the Golgi structural integrity, as well as the processing, activity, and endocytic recycling of LDL receptors. Involved in the Golgi disassembly and reassembly processes during cell cycle. Involved in autophagy by playing a role in early endosome function. Plays a role in organellar compartmentalization of secretory compartments including endoplasmic reticulum (ER)-Golgi intermediate compartment (ERGIC), Golgi, trans-Golgi network (TGN) and recycling endosomes, and in biosynthetic transport of CAV1. Plays a functional role in facilitating the transport of kappa-type opioid receptor mRNAs into axons and enhances translation of these proteins in the axonal compartment of dorsal root ganglion (DRG) cells. Required for limiting lipid storage in lipid droplets. Involved in lipid homeostasis by regulating the presence of perilipin family members PLIN2 and PLIN3 at the lipid droplet surface and promoting the association of adipocyte triglyceride lipase (PNPLA2) with the lipid droplet surface to mediate lipolysis. This is Coatomer subunit beta (Copb1) from Rattus norvegicus (Rat).